The primary structure comprises 637 residues: Chaperone protein HtpG (637 aa).

The segment at 1-345 (MSQQETHGFQ…SNDLPLNVSR (345 aa)) is a; substrate-binding. The segment at 346–562 (EILQDNHITK…EGEMSSQMIK (217 aa)) is b. Residues 563–637 (LMQAAGQPVP…MNQMLLANLK (75 aa)) are c.

The protein belongs to the heat shock protein 90 family. In terms of assembly, homodimer.

The protein resides in the cytoplasm. In terms of biological role, molecular chaperone. Has ATPase activity. This is Chaperone protein HtpG from Shewanella sp. (strain ANA-3).